A 435-amino-acid chain; its full sequence is 5-methylthioadenosine/S-adenosylhomocysteine deaminase (435 aa).

2 residues coordinate Zn(2+): His-65 and His-67. Positions 94, 150, and 189 each coordinate substrate. His-216 contributes to the Zn(2+) binding site. The substrate site is built by Glu-219 and Asp-304. Residue Asp-304 participates in Zn(2+) binding.

This sequence belongs to the metallo-dependent hydrolases superfamily. MTA/SAH deaminase family. Zn(2+) is required as a cofactor.

The enzyme catalyses S-adenosyl-L-homocysteine + H2O + H(+) = S-inosyl-L-homocysteine + NH4(+). It catalyses the reaction S-methyl-5'-thioadenosine + H2O + H(+) = S-methyl-5'-thioinosine + NH4(+). Its function is as follows. Catalyzes the deamination of 5-methylthioadenosine and S-adenosyl-L-homocysteine into 5-methylthioinosine and S-inosyl-L-homocysteine, respectively. Is also able to deaminate adenosine. The sequence is that of 5-methylthioadenosine/S-adenosylhomocysteine deaminase from Bacillus cereus (strain G9842).